A 564-amino-acid polypeptide reads, in one-letter code: Malignant brain tumor repeat protein 1 (564 aa).

MBT repeat units lie at residues 64 to 176 (FTWS…MKWL), 205 to 327 (RPTE…TKAT), 331 to 442 (LEHS…LDRL), and 450 to 549 (FKWE…LRHP).

As to quaternary structure, interacts with histone H3 that is trimethylated at 'Lys-9' (H3K9me3).

In Caenorhabditis elegans, this protein is Malignant brain tumor repeat protein 1 (mbtr-1).